Consider the following 640-residue polypeptide: Replication protein A 70 kDa DNA-binding subunit A (640 aa).

A DNA-binding region (OB) is located at residues 211 to 293 (AIKARVTAKG…NHLKNEWEIF (83 aa)). A C4-type zinc finger spans residues 503 to 529 (CPLMIGDKQCNKKVTRSGTNRWLCDRC).

The protein belongs to the replication factor A protein 1 family. Heterotrimer of RPA1, RPA2 and RPA3 (canonical replication protein A complex). Interacts with RPA2A. In terms of tissue distribution, expressed in roots, leaves, stalks and flower buds.

The protein resides in the nucleus. In terms of biological role, component of the replication protein A complex (RPA) required for DNA recombination, repair and replication. The activity of RPA is mediated by single-stranded DNA binding and protein interactions. Plays an essential role at later stages of meiotic recombination events required for the formation of class I crossovers. Is essential for normal progression through meiosis in pollen mother cells. Is involved in repair of double-strand DNA breaks (DSBs) induced by genotoxic stresses, but does not seem to be required for the repair of meiotic DSBs. The sequence is that of Replication protein A 70 kDa DNA-binding subunit A (RPA1A) from Arabidopsis thaliana (Mouse-ear cress).